The primary structure comprises 486 residues: UDP-N-acetylmuramate--L-alanine ligase (486 aa).

ATP is bound at residue 129–135 (GTHGKTT).

Belongs to the MurCDEF family.

Its subcellular location is the cytoplasm. The enzyme catalyses UDP-N-acetyl-alpha-D-muramate + L-alanine + ATP = UDP-N-acetyl-alpha-D-muramoyl-L-alanine + ADP + phosphate + H(+). It participates in cell wall biogenesis; peptidoglycan biosynthesis. Cell wall formation. This is UDP-N-acetylmuramate--L-alanine ligase from Vibrio vulnificus (strain CMCP6).